Consider the following 795-residue polypeptide: Protocadherin beta-5 (795 aa).

An N-terminal signal peptide occupies residues 1–30; sequence METALAKTPQKRQVMFLAILLLLWEAGSEA. At 31–689 the chain is on the extracellular side; it reads VRYSIPEETE…AQADSLTVYL (659 aa). Cadherin domains follow at residues 35–133, 138–242, 247–346, 351–450, and 455–560; these read IPEE…APEF, MLLK…APEF, YEVQ…APEL, LSSP…APAF, and YTLF…SPFV. N-linked (GlcNAc...) asparagine glycosylation is present at N169. K296 is subject to N6-acetyllysine. N-linked (GlcNAc...) asparagine glycosylation is found at N417 and N435. An N-linked (GlcNAc...) asparagine glycan is attached at N566. The region spanning 567–670 is the Cadherin 6 domain; it reads GSAPCTELVP…LVDGFSQPYL (104 aa). The helical transmembrane segment at 690–710 threads the bilayer; sequence VVALASVSSLFLFSVLLFVAV. Topologically, residues 711–795 are cytoplasmic; sequence RLCRRSRAAP…AAFRNSFGLN (85 aa).

Its subcellular location is the cell membrane. Its function is as follows. Potential calcium-dependent cell-adhesion protein. May be involved in the establishment and maintenance of specific neuronal connections in the brain. In Homo sapiens (Human), this protein is Protocadherin beta-5 (PCDHB5).